We begin with the raw amino-acid sequence, 143 residues long: Large ribosomal subunit protein uL13 (143 aa).

It belongs to the universal ribosomal protein uL13 family. Part of the 50S ribosomal subunit.

In terms of biological role, this protein is one of the early assembly proteins of the 50S ribosomal subunit, although it is not seen to bind rRNA by itself. It is important during the early stages of 50S assembly. The protein is Large ribosomal subunit protein uL13 of Solibacter usitatus (strain Ellin6076).